Consider the following 293-residue polypeptide: MMRIALFLITNLAVMLVFGLVLSLTGIQSSSVQGLMIMAGLFGFGGAFVSLLMSKWMALRSVGGEVIEQPRNETERWLVETVRTQSQQAGIAMPQVAIYHAPDINAFATGARRDASLVAVSTGLLQNMSRDEAEAVIAHEISHIANGDMVTMTLVQGIVNTFVIFVSRLIAQVVSGFLSGNRDEGESSNGNPLVYFAVATVLELVFGILASIITMWFSRYREFHADAGSAKLVGREKMIAALQRLKTSYEPQEESSMMAFCINGKSKSFSELFMSHPPLDKRIEALRSGDYLK.

The next 2 helical transmembrane spans lie at 4 to 24 (IALF…VLSL) and 34 to 54 (GLMI…LLMS). Position 139 (H139) interacts with Zn(2+). E140 is an active-site residue. Residue H143 participates in Zn(2+) binding. Helical transmembrane passes span 158–178 (IVNT…SGFL) and 193–213 (LVYF…ASII). Residue E222 coordinates Zn(2+).

This sequence belongs to the peptidase M48B family. The cofactor is Zn(2+).

It is found in the cell inner membrane. The chain is Protease HtpX from Pectobacterium carotovorum subsp. carotovorum (strain PC1).